Here is a 372-residue protein sequence, read N- to C-terminus: 4-hydroxy-3-methylbut-2-en-1-yl diphosphate synthase (flavodoxin) (372 aa).

Residues Cys-270, Cys-273, Cys-305, and Glu-312 each coordinate [4Fe-4S] cluster.

This sequence belongs to the IspG family. It depends on [4Fe-4S] cluster as a cofactor.

It catalyses the reaction (2E)-4-hydroxy-3-methylbut-2-enyl diphosphate + oxidized [flavodoxin] + H2O + 2 H(+) = 2-C-methyl-D-erythritol 2,4-cyclic diphosphate + reduced [flavodoxin]. It functions in the pathway isoprenoid biosynthesis; isopentenyl diphosphate biosynthesis via DXP pathway; isopentenyl diphosphate from 1-deoxy-D-xylulose 5-phosphate: step 5/6. In terms of biological role, converts 2C-methyl-D-erythritol 2,4-cyclodiphosphate (ME-2,4cPP) into 1-hydroxy-2-methyl-2-(E)-butenyl 4-diphosphate. This chain is 4-hydroxy-3-methylbut-2-en-1-yl diphosphate synthase (flavodoxin), found in Alteromonas mediterranea (strain DSM 17117 / CIP 110805 / LMG 28347 / Deep ecotype).